The sequence spans 261 residues: Cytochrome c oxidase subunit 3 (261 aa).

Residues Met1–Pro15 are Mitochondrial matrix-facing. A helical transmembrane segment spans residues Trp16–Trp34. At Phe35 to Thr40 the chain is on the mitochondrial intermembrane side. Residues Thr41–Thr66 form a helical membrane-spanning segment. Over Phe67–Thr72 the chain is Mitochondrial matrix. A helical transmembrane segment spans residues Pro73–Ser105. Residues Leu106–Glu128 are Mitochondrial intermembrane-facing. Residues Val129–Met152 traverse the membrane as a helical segment. Over Glu153 to Asn155 the chain is Mitochondrial matrix. The helical transmembrane segment at Arg156–Glu183 threads the bilayer. Topologically, residues Ala184 to Asp190 are mitochondrial intermembrane. The chain crosses the membrane as a helical span at residues Gly191–Leu223. The Mitochondrial matrix portion of the chain corresponds to Lys224 to His232. A helical membrane pass occupies residues Phe233–Ile256. The Mitochondrial intermembrane segment spans residues Tyr257–Ser261.

The protein belongs to the cytochrome c oxidase subunit 3 family. As to quaternary structure, component of the cytochrome c oxidase (complex IV, CIV), a multisubunit enzyme composed of 14 subunits. The complex is composed of a catalytic core of 3 subunits MT-CO1, MT-CO2 and MT-CO3, encoded in the mitochondrial DNA, and 11 supernumerary subunits COX4I, COX5A, COX5B, COX6A, COX6B, COX6C, COX7A, COX7B, COX7C, COX8 and NDUFA4, which are encoded in the nuclear genome. The complex exists as a monomer or a dimer and forms supercomplexes (SCs) in the inner mitochondrial membrane with NADH-ubiquinone oxidoreductase (complex I, CI) and ubiquinol-cytochrome c oxidoreductase (cytochrome b-c1 complex, complex III, CIII), resulting in different assemblies (supercomplex SCI(1)III(2)IV(1) and megacomplex MCI(2)III(2)IV(2)).

Its subcellular location is the mitochondrion inner membrane. The enzyme catalyses 4 Fe(II)-[cytochrome c] + O2 + 8 H(+)(in) = 4 Fe(III)-[cytochrome c] + 2 H2O + 4 H(+)(out). In terms of biological role, component of the cytochrome c oxidase, the last enzyme in the mitochondrial electron transport chain which drives oxidative phosphorylation. The respiratory chain contains 3 multisubunit complexes succinate dehydrogenase (complex II, CII), ubiquinol-cytochrome c oxidoreductase (cytochrome b-c1 complex, complex III, CIII) and cytochrome c oxidase (complex IV, CIV), that cooperate to transfer electrons derived from NADH and succinate to molecular oxygen, creating an electrochemical gradient over the inner membrane that drives transmembrane transport and the ATP synthase. Cytochrome c oxidase is the component of the respiratory chain that catalyzes the reduction of oxygen to water. Electrons originating from reduced cytochrome c in the intermembrane space (IMS) are transferred via the dinuclear copper A center (CU(A)) of subunit 2 and heme A of subunit 1 to the active site in subunit 1, a binuclear center (BNC) formed by heme A3 and copper B (CU(B)). The BNC reduces molecular oxygen to 2 water molecules using 4 electrons from cytochrome c in the IMS and 4 protons from the mitochondrial matrix. The chain is Cytochrome c oxidase subunit 3 (MT-CO3) from Gazella cuvieri (Cuvier's gazelle).